The sequence spans 407 residues: Imidazolonepropionase (407 aa).

Positions 74 and 76 each coordinate Fe(3+). Zn(2+) contacts are provided by His74 and His76. Arg83, Tyr146, and His179 together coordinate 4-imidazolone-5-propanoate. N-formimidoyl-L-glutamate is bound at residue Tyr146. His244 serves as a coordination point for Fe(3+). His244 is a Zn(2+) binding site. Residue Gln247 coordinates 4-imidazolone-5-propanoate. Asp319 contributes to the Fe(3+) binding site. Residue Asp319 coordinates Zn(2+). Positions 321 and 323 each coordinate N-formimidoyl-L-glutamate. 4-imidazolone-5-propanoate is bound at residue Thr324.

This sequence belongs to the metallo-dependent hydrolases superfamily. HutI family. It depends on Zn(2+) as a cofactor. The cofactor is Fe(3+).

Its subcellular location is the cytoplasm. The catalysed reaction is 4-imidazolone-5-propanoate + H2O = N-formimidoyl-L-glutamate. It participates in amino-acid degradation; L-histidine degradation into L-glutamate; N-formimidoyl-L-glutamate from L-histidine: step 3/3. In terms of biological role, catalyzes the hydrolytic cleavage of the carbon-nitrogen bond in imidazolone-5-propanoate to yield N-formimidoyl-L-glutamate. It is the third step in the universal histidine degradation pathway. This is Imidazolonepropionase from Salmonella paratyphi C (strain RKS4594).